An 84-amino-acid polypeptide reads, in one-letter code: MDAHTIIVAATAIAVGIIFGAAGLGSAIGWGLITSKTIEGITRQPEMRPQLLVNTFIFAGLMESFPFIILAFGFWFLFANPFLG.

A run of 2 helical transmembrane segments spans residues 13-33 (IAVG…WGLI) and 56-76 (FIFA…GFWF).

Belongs to the ATPase C chain family. As to quaternary structure, F-type ATPases have 2 components, F(1) - the catalytic core - and F(0) - the membrane proton channel. F(1) has five subunits: alpha(3), beta(3), gamma(1), delta(1), epsilon(1). F(0) has three main subunits: a(1), b(2) and c(10-14). The alpha and beta chains form an alternating ring which encloses part of the gamma chain. F(1) is attached to F(0) by a central stalk formed by the gamma and epsilon chains, while a peripheral stalk is formed by the delta and b chains.

The protein localises to the cell inner membrane. Functionally, f(1)F(0) ATP synthase produces ATP from ADP in the presence of a proton or sodium gradient. F-type ATPases consist of two structural domains, F(1) containing the extramembraneous catalytic core and F(0) containing the membrane proton channel, linked together by a central stalk and a peripheral stalk. During catalysis, ATP synthesis in the catalytic domain of F(1) is coupled via a rotary mechanism of the central stalk subunits to proton translocation. Its function is as follows. Key component of the F(0) channel; it plays a direct role in translocation across the membrane. A homomeric c-ring of between 10-14 subunits forms the central stalk rotor element with the F(1) delta and epsilon subunits. This is ATP synthase subunit c from Acidithiobacillus ferrooxidans (strain ATCC 23270 / DSM 14882 / CIP 104768 / NCIMB 8455) (Ferrobacillus ferrooxidans (strain ATCC 23270)).